Reading from the N-terminus, the 233-residue chain is Apoptosis regulator Bcl-2 (233 aa).

The short motif at aspartate 10–tryptophan 30 is the BH4 element. Residues alanine 32–glycine 86 form a disordered region. The short motif at valine 87–arginine 101 is the BH3 element. The BH1 motif lies at glutamate 130–glycine 149. The BH2 signature appears at asparagine 181–tyrosine 196. A helical membrane pass occupies residues tryptophan 208–alanine 228.

Belongs to the Bcl-2 family. In terms of assembly, forms homodimers, and heterodimers with BAX, BAD, BAK and Bcl-X(L). Heterodimerization with BAX requires intact BH1 and BH2 motifs, and is necessary for anti-apoptotic activity. Also interacts with APAF1 and RAF-1. As to expression, in adult chicken expressed, in thymus, spleen, kidney, heart, ovary and brain, with the highest levels in the thymus. In the embryo, highly levels expressed in all tissues with high levels in the bursa of Fabricius.

Its subcellular location is the mitochondrion outer membrane. The protein resides in the nucleus membrane. It is found in the endoplasmic reticulum membrane. The protein localises to the cytoplasm. In terms of biological role, suppresses apoptosis in a variety of cell systems including factor-dependent lymphohematopoietic and neural cells. Regulates cell death by controlling the mitochondrial membrane permeability. Appears to function in a feedback loop system with caspases. Inhibits caspase activity either by preventing the release of cytochrome c from the mitochondria and/or by binding to the apoptosis-activating factor (APAF-1). This Gallus gallus (Chicken) protein is Apoptosis regulator Bcl-2 (BCL2).